A 497-amino-acid polypeptide reads, in one-letter code: Interferon regulatory factor 5 (497 aa).

Residues 12-18 (PRRVRLK) carry the Nuclear localization signal motif. Positions 14 to 122 (RVRLKPWLVA…QPYKIYEVCS (109 aa)) form a DNA-binding region, IRF tryptophan pentad repeat. A disordered region spans residues 124 to 178 (GPAPTESQPTDDYVLGEEEEEEEEELQRMLPGLSITEPALPGPPNAPYSLPKEDT). Residues 137–148 (VLGEEEEEEEEE) are compositionally biased toward acidic residues. Positions 149–159 (LQRMLPGLSIT) match the Nuclear export signal motif. The residue at position 157 (serine 157) is a Phosphoserine; by TBK1. A Phosphoserine modification is found at serine 300. Residues lysine 410 and lysine 411 each participate in a glycyl lysine isopeptide (Lys-Gly) (interchain with G-Cter in ubiquitin) cross-link. The residue at position 430 (serine 430) is a Phosphoserine. Residue serine 434 is modified to Phosphoserine; by IKKB. 2 positions are modified to phosphoserine: serine 436 and serine 439. The residue at position 445 (serine 445) is a Phosphoserine; by IKKB.

Belongs to the IRF family. In terms of assembly, homodimer, when phosphorylated. Interacts with TASL (via pLxIS motif); interaction takes place downstream of TLR7, TLR8 or TLR9, leading to its activation. Interacts with MYD88 and TRAF6. Post-translationally, phosphorylation of serine and threonine residues by IKBKB in a C-terminal autoinhibitory region, stimulates dimerization, transport into the nucleus, assembly with the coactivator CBP/EP300 and initiation of transcription. In terms of processing, 'Lys-63'-linked polyubiquitination by TRAF6 is required for activation.

It localises to the cytoplasm. It is found in the nucleus. Its activity is regulated as follows. Maintained as a monomer in an autoinhibited state. Phosphorylation and activation follow the following steps: innate adapter protein TASL recruits IRF5, thereby licensing IRF5 for phosphorylation by IKBKB. Phosphorylated IRF5 dissociates from the adapter proteins, dimerizes, and then enters the nucleus to induce IFNs. Functionally, transcription factor that plays a critical role in innate immunity by activating expression of type I interferon (IFN) IFNA and INFB and inflammatory cytokines downstream of endolysosomal toll-like receptors TLR7, TLR8 and TLR9. Regulates the transcription of type I IFN genes (IFN-alpha and IFN-beta) and IFN-stimulated genes (ISG) by binding to an interferon-stimulated response element (ISRE) in their promoters. Can efficiently activate both the IFN-beta (IFNB) and the IFN-alpha (IFNA) genes and mediate their induction downstream of the TLR-activated, MyD88-dependent pathway. The polypeptide is Interferon regulatory factor 5 (Mus musculus (Mouse)).